Here is an 804-residue protein sequence, read N- to C-terminus: E3 UFM1-protein ligase 1 homolog (804 aa).

The residue at position 1 (M1) is an N-acetylmethionine. The disordered stretch occupies residues 397–483 (IHPSSKSSES…VKAQESNNII (87 aa)). Over residues 400 to 409 (SSKSSESTES) the composition is skewed to low complexity. Basic and acidic residues predominate over residues 463–475 (LDSKAGGKKESVK).

Belongs to the UFL1 family.

E3 UFM1-protein ligase that mediates ufmylation of target proteins. The chain is E3 UFM1-protein ligase 1 homolog from Arabidopsis thaliana (Mouse-ear cress).